A 198-amino-acid chain; its full sequence is SOSS complex subunit B2 (198 aa).

Residues 26 to 89 constitute a DNA-binding region (OB); the sequence is IVLEIGRVTK…SMWKGCLTLY (64 aa). Positions 114 to 198 are disordered; the sequence is EPNPDYRGQQ…ARDPRRAFKR (85 aa). 2 stretches are compositionally biased toward polar residues: residues 136 to 151 and 173 to 188; these read STNT…QTGP and LPGT…TISN.

It belongs to the SOSS-B family. SOSS-B2 subfamily. In terms of assembly, component of the SOSS complex, composed of SOSS-B (SOSS-B1/NABP2 or SOSS-B2/NABP1), SOSS-A/INTS3 and SOSS-C/INIP. SOSS complexes containing SOSS-B1/NABP2 are more abundant than complexes containing SOSS-B2/NABP1. As to expression, ubiquitous with high expression in the thymus.

The protein resides in the nucleus. In terms of biological role, component of the SOSS complex, a multiprotein complex that functions downstream of the MRN complex to promote DNA repair and G2/M checkpoint. In the SOSS complex, acts as a sensor of single-stranded DNA that binds to single-stranded DNA, in particular to polypyrimidines. The SOSS complex associates with DNA lesions and influences diverse endpoints in the cellular DNA damage response including cell-cycle checkpoint activation, recombinational repair and maintenance of genomic stability. Required for efficient homologous recombination-dependent repair of double-strand breaks (DSBs) and ATM-dependent signaling pathways. The protein is SOSS complex subunit B2 (Nabp1) of Mus musculus (Mouse).